The following is a 146-amino-acid chain: Leghemoglobin Lb120-1 (146 aa).

The Globin domain maps to 2–146 (GFTEKQEALV…LASAIKKAMN (145 aa)). Nitrated tyrosine is present on residues Y24 and Y29. S44 is a heme b binding site. S44 carries the post-translational modification Phosphoserine. H61 provides a ligand contact to O2. The heme b site is built by K64, H93, and K96. Y134 is modified (nitrated tyrosine).

It belongs to the plant globin family. Monomer. In terms of processing, nitrated in effective nodules and particularly in hypoxic conditions; this mechanism may play a protective role in the symbiosis by buffering toxic peroxynitrite NO(2)(-). Nitration level decrease during nodule senescence. Post-translationally, phosphorylation at Ser-44 disrupts the molecular environment of its porphyrin ring oxygen binding pocket, thus leading to a reduced oxygen consumption and to the delivery of oxygen O(2) to symbiosomes. As to expression, root nodules.

The protein localises to the cytoplasm. It is found in the cytosol. It localises to the nucleus. Leghemoglobin that reversibly binds oxygen O(2) through a pentacoordinated heme iron. In root nodules, facilitates the diffusion of oxygen to the bacteroids while preventing the bacterial nitrogenase from being inactivated by buffering dioxygen, nitric oxide and carbon monoxide, and promoting the formation of reactive oxygen species (ROS, e.g. H(2)O(2)). This role is essential for symbiotic nitrogen fixation (SNF). The polypeptide is Leghemoglobin Lb120-1 (Pisum sativum (Garden pea)).